A 405-amino-acid chain; its full sequence is uncharacterized protein (405 aa).

Helical transmembrane passes span 3–23, 42–62, 73–93, 95–115, 135–155, 162–182, 209–229, 248–268, 280–300, 309–329, 346–366, and 377–397; these read IIAK…PTTE, GITQ…ILTL, PIAL…IFAV, IEML…GSVI, SLSP…GYII, YVFV…YKVL, ILWL…GFFI, KLAF…GYLI, GLGF…AFIL, LAIA…NLLI, TAGS…TYLV, and FALL…CIWV.

It belongs to the major facilitator superfamily. Bcr/CmlA family.

It is found in the cell inner membrane. This is an uncharacterized protein from Rickettsia felis (strain ATCC VR-1525 / URRWXCal2) (Rickettsia azadi).